The sequence spans 76 residues: Putative membrane protein insertion efficiency factor (76 aa).

Belongs to the UPF0161 family.

The protein resides in the cell inner membrane. Its function is as follows. Could be involved in insertion of integral membrane proteins into the membrane. This chain is Putative membrane protein insertion efficiency factor, found in Anaeromyxobacter dehalogenans (strain 2CP-C).